A 144-amino-acid chain; its full sequence is UPF0102 protein Veis_0630 (144 aa).

Residues 11–31 (PPAAAPGPAPAPASAATASER) are disordered.

The protein belongs to the UPF0102 family.

In Verminephrobacter eiseniae (strain EF01-2), this protein is UPF0102 protein Veis_0630.